Reading from the N-terminus, the 1193-residue chain is Dynamin-like protein A (1193 aa).

A D1, associates with and fuses membranes, tethers lipsomes region spans residues 1–609 (MTDQNRKELL…AFRERVKRLE (609 aa)). Residues 50-57 (GHYSAGKS) form a G1 motif D1 region. Positions 76–78 (TSA) are G2 motif D1. The segment at 141–144 (DTPG) is G3 motif D1. The segment at 199–202 (NQID) is G4 motif D1. The segment at 561–1193 (MPKSEIKMEQ…WKNSDNTIKM (633 aa)) is D2, does not associate with membranes. The interval 619–626 (GGFSSGKS) is G1 motif D2. Residues 645–647 (TTA) form a G2 motif D2 region. A G3 motif D2 region spans residues 774–777 (DTPG). The segment at 837–840 (NAAD) is G4 motif D2.

Belongs to the TRAFAC class dynamin-like GTPase superfamily. Dynamin/Fzo/YdjA family. As to quaternary structure, homodimer in solution. Both D1 and D2 domains interact with YwpG, YneK interacts only with D1 while RNase Y (rny) only interacts with whole protein. Probably oligomerizes at damaged membrane sites. It depends on Mg(2+) as a cofactor.

The protein resides in the cell membrane. The enzyme catalyses GTP + H2O = GDP + phosphate + H(+). Functionally, mediates lipid mixing of vesicles and full mixing of their contents in the absence and presence of GTP. Tethers and mixes small vesicles better than larger ones, indicating a curvature preference. GTP slows down DynA-mediated lipid fusion, perhaps controlling its activity. Prefers phospholipid composition close to the B.subtilis membrane; requires phosphatidylglycerol for fusion has no activity on pure phosphatidylethanolamine vesicles. Regulates membrane lipid diffusion. Required to prevent membrane damage when exposed to low levels of membrane-damaging antibiotics or to bacteriophage. Probably surveys the cell membrane for stress; localizes to sites of membrane damage (treatment with nisin) and forms foci in cells treated with pore-forming compounds (CCCP). May assist membrane repair, possibly by membrane tethering and fusion. Probably functions both in early and late cell division, affects the proper formation of the FtsZ ring. Plays a non-redundant role with flottilin (floT) in membrane dynamics and cell shape. Probably able to bend membranes. Tethers liposomes and mediates their fusion; this does not require GTPase activity or the presence of GTP. Both GTPase domains (dynamin-type G) are required for GTPase activity. In terms of biological role, has intrinsic affinity for membranes and membrane distortion capability; causes tubulation and membrane distortion when expressed in a Drosophila cell line. This is Dynamin-like protein A from Bacillus subtilis (strain 168).